The chain runs to 203 residues: Large ribosomal subunit protein uL22 (203 aa).

The span at 138–167 (PENTQSGALSQQSQAEQPQNDPENGVDSQL) shows a compositional bias: polar residues. The tract at residues 138–203 (PENTQSGALS…TVLAQEKEVK (66 aa)) is disordered. Residues 168 to 177 (SAKTNSTTTA) show a composition bias toward low complexity. Positions 183 to 196 (ADNSTKNDATNTVL) are enriched in polar residues.

It belongs to the universal ribosomal protein uL22 family. In terms of assembly, part of the 50S ribosomal subunit.

Its function is as follows. This protein binds specifically to 23S rRNA; its binding is stimulated by other ribosomal proteins, e.g. L4, L17, and L20. It is important during the early stages of 50S assembly. It makes multiple contacts with different domains of the 23S rRNA in the assembled 50S subunit and ribosome. The globular domain of the protein is located near the polypeptide exit tunnel on the outside of the subunit, while an extended beta-hairpin is found that lines the wall of the exit tunnel in the center of the 70S ribosome. This chain is Large ribosomal subunit protein uL22, found in Mesomycoplasma hyopneumoniae (strain 7448) (Mycoplasma hyopneumoniae).